Here is a 740-residue protein sequence, read N- to C-terminus: Pheromone-regulated membrane protein 10 (740 aa).

Disordered stretches follow at residues Met-1–Leu-48, Phe-65–Cys-97, and Asn-241–Glu-269. Residues Gln-7 to Ser-18 are compositionally biased toward basic and acidic residues. Over residues Glu-19 to Glu-33 the composition is skewed to low complexity. Positions Asp-67–Glu-76 are enriched in acidic residues. Residues Ser-256 to Thr-267 are compositionally biased toward polar residues. The next 10 membrane-spanning stretches (helical) occupy residues Ala-422 to Gly-442, Trp-445 to Val-465, Val-475 to Pro-495, Ile-499 to Leu-519, Ile-541 to Ile-561, Glu-574 to Ile-594, Trp-599 to Ser-619, His-622 to Gly-642, Gly-651 to Ser-671, and Ile-707 to Val-727.

It belongs to the ThrE exporter (TC 2.A.79) family.

It localises to the membrane. This is Pheromone-regulated membrane protein 10 from Eremothecium gossypii (strain ATCC 10895 / CBS 109.51 / FGSC 9923 / NRRL Y-1056) (Yeast).